We begin with the raw amino-acid sequence, 421 residues long: UPF0415 protein C7orf25 homolog (421 aa).

It belongs to the UPF0415 family.

In Bos taurus (Bovine), this protein is UPF0415 protein C7orf25 homolog.